The following is a 113-amino-acid chain: UPF0212 protein AF_0282 (113 aa).

Belongs to the UPF0212 family.

This Archaeoglobus fulgidus (strain ATCC 49558 / DSM 4304 / JCM 9628 / NBRC 100126 / VC-16) protein is UPF0212 protein AF_0282.